The chain runs to 429 residues: Enolase (429 aa).

Q163 is a binding site for (2R)-2-phosphoglycerate. The Proton donor role is filled by E205. Residues D242, E285, and D312 each coordinate Mg(2+). Residues K337, R366, S367, and K388 each coordinate (2R)-2-phosphoglycerate. K337 (proton acceptor) is an active-site residue.

The protein belongs to the enolase family. Mg(2+) serves as cofactor.

The protein resides in the cytoplasm. It localises to the secreted. Its subcellular location is the cell surface. It carries out the reaction (2R)-2-phosphoglycerate = phosphoenolpyruvate + H2O. Its pathway is carbohydrate degradation; glycolysis; pyruvate from D-glyceraldehyde 3-phosphate: step 4/5. Catalyzes the reversible conversion of 2-phosphoglycerate (2-PG) into phosphoenolpyruvate (PEP). It is essential for the degradation of carbohydrates via glycolysis. In Methylorubrum populi (strain ATCC BAA-705 / NCIMB 13946 / BJ001) (Methylobacterium populi), this protein is Enolase.